The chain runs to 376 residues: 23S rRNA (uracil(747)-C(5))-methyltransferase RlmC (376 aa).

4 residues coordinate [4Fe-4S] cluster: cysteine 3, cysteine 11, cysteine 14, and cysteine 87. S-adenosyl-L-methionine-binding residues include glutamine 212, phenylalanine 241, glutamate 262, and asparagine 307. Cysteine 334 functions as the Nucleophile in the catalytic mechanism.

This sequence belongs to the class I-like SAM-binding methyltransferase superfamily. RNA M5U methyltransferase family. RlmC subfamily.

It carries out the reaction uridine(747) in 23S rRNA + S-adenosyl-L-methionine = 5-methyluridine(747) in 23S rRNA + S-adenosyl-L-homocysteine + H(+). Its function is as follows. Catalyzes the formation of 5-methyl-uridine at position 747 (m5U747) in 23S rRNA. In Salmonella newport (strain SL254), this protein is 23S rRNA (uracil(747)-C(5))-methyltransferase RlmC.